A 552-amino-acid polypeptide reads, in one-letter code: MVDMGGLDNLIANTAYLQARKSSDADSKELQRRRRSLMLPGPQSCEQLRQALATDFHSLCEQQPIGRRLFRDFLATVPAYQEARGFLEEVQSWELAEEGPAKGSALQGLVTTCAAAPVPGRPHPFFSPALVTKCQAATTDDDRASLVELAKAEVMAFLQDQPFREFLASPFYDKFLQWKVFEMQPVSDKYFEEFRVLGKGGFGEVCAVQVKNTGKMYACKKLDKKRLKKKNGEKMALLEKEILERVSSPFIVSLAYAFESKSHLCLVMSLMNGGDLKFHIYSVGEPGLDMSRVIFYSAQITCGVLHLHSLGIVYRDMKPENVLLDDLGNCRLSDLGLAVQIQDGKPITQRAGTNGYMAPEILMEKASYSYPVDWFAMGCSIYEMVAGRTPFRDYKEKVSKEDLKQRTLKEEVRFQHSNFTEEAKDICRLFLAKTPEQRLGSREKSDDPRKHHFFKTINFPRLEAGLVEPPFVPDPSVVYAKDINEIDDFSEVRGVEFDDNDKQFFQRFATGAVPIAWQEEIIETGPFAELNDPNRPAGCGEGSSRSGVCLLL.

The residue at position 36 (S36) is a Phosphoserine; by PKA. The RGS domain occupies 56-176 (FHSLCEQQPI…LASPFYDKFL (121 aa)). The region spanning 191-454 (FEEFRVLGKG…SDDPRKHHFF (264 aa)) is the Protein kinase domain. Residues 197-205 (LGKGGFGEV) and K220 each bind ATP. D316 acts as the Proton acceptor in catalysis. The region spanning 455–520 (KTINFPRLEA…GAVPIAWQEE (66 aa)) is the AGC-kinase C-terminal domain. A Cysteine methyl ester modification is found at C549. A lipid anchor (S-geranylgeranyl cysteine) is attached at C549. A propeptide spans 550–552 (LLL) (removed in mature form).

Belongs to the protein kinase superfamily. AGC Ser/Thr protein kinase family. GPRK subfamily. In terms of assembly, interacts (when prenylated) with PDE6D; this promotes release from membranes. In terms of processing, autophosphorylated in vitro at Ser-490. Phosphorylation at Ser-36 is regulated by light and activated by cAMP.

Its subcellular location is the membrane. The catalysed reaction is L-threonyl-[rhodopsin] + ATP = O-phospho-L-threonyl-[rhodopsin] + ADP + H(+). The enzyme catalyses L-seryl-[rhodopsin] + ATP = O-phospho-L-seryl-[rhodopsin] + ADP + H(+). With respect to regulation, inhibited by phosphorylation of Ser-36. Retina-specific kinase involved in the shutoff of the photoresponse and adaptation to changing light conditions via cone opsin phosphorylation, including rhodopsin (RHO). The polypeptide is Rhodopsin kinase GRK7 (GRK7) (Bos taurus (Bovine)).